The sequence spans 659 residues: MFKIYNNGNPIPMGYSQAVENNVQITNFALFSAAAIGVELCLFDEQNQETRLPMVRTENVWHLAVTGVKTGTEYAFRIHGEFANPQKLILDPYAKAVNGKPDLSSEESRSWFLLSDNRDNAHLAPRAVVISEEFDWENDTSPNTPWAETIVYELHVKGFSQLNEKIPAALRGTYTGLAHPVNLAYLKELGVTAVELLPVNFHINEPHLQARGLQNYWGYNPLAMFAVEPKYAATNNPLAEFKTMVKAFHKAGIEVILDVVFNHSAESEQTYPTFSQRGIDDQTYYWRNDQGRYINWTGCGNMLNLSSDVGRKWVVDCLRYWVEQCHIDGFRFDLATVLGRDTPDFNSSAQLFTDIKNEPSLQNIKLIAEPWDIGHYGYQVGNFPSYFAEWNDRFRDDLCRFWLWKSGEIGAFAERFAGSSDLFKKNDRLPHTTLNFITAHDGFTLKDLVSYNQKHNETNGEENRDGRNENYSYNHGVEGSTESLSEPQKSAVENNRTFAQSGLLMSLLLANGTPMLLAGDEFGNTQYGNNNAYCQDNEITWLKWANFNEELFELTKQTIALRKQIGSLNKDQWWSDENVQWLNIVGEPMTVEDWQNQQTKALQVVLDNRWLLLINAKAEGQMFHLPNRKWKPQIGTHNVTLEAQQAELSSMGFCMLNDE.

Catalysis depends on Asp-333, which acts as the Nucleophile. The Proton donor role is filled by Glu-369. Residues 456 to 468 show a composition bias toward basic and acidic residues; that stretch reads NETNGEENRDGRN. The tract at residues 456 to 486 is disordered; sequence NETNGEENRDGRNENYSYNHGVEGSTESLSE.

The protein belongs to the glycosyl hydrolase 13 family.

The protein is Glycogen operon protein GlgX homolog (glgX) of Haemophilus influenzae (strain ATCC 51907 / DSM 11121 / KW20 / Rd).